Reading from the N-terminus, the 449-residue chain is Protein phosphatase fem-2 (449 aa).

The interval E28–E34 is interaction with fem-1 and fem-3. The interaction with fem-3 stretch occupies residues I54–F56. In terms of domain architecture, PPM-type phosphatase spans G160–L424. D202, G203, D370, and D415 together coordinate Mg(2+).

This sequence belongs to the PP2C family. In terms of assembly, component of a complex containing fem-1, fem-2 and fem-3. Interacts (via N-terminus) with fem-1 and fem-3. Component of the CBC(fem-1) E3 ubiquitin-protein ligase complex, at least composed of cul-2, elc-1, tra-1, fem-1, fem-2 and fem-3; mediates the ubiquitination and subsequent proteasomal degradation of tra-1. Interacts with tra-1. Interacts with sel-10. The cofactor is Mg(2+). It depends on Mn(2+) as a cofactor.

The enzyme catalyses O-phospho-L-seryl-[protein] + H2O = L-seryl-[protein] + phosphate. It catalyses the reaction O-phospho-L-threonyl-[protein] + H2O = L-threonyl-[protein] + phosphate. Its function is as follows. Dephosphorylates auto-phosphorylated Ca(2+)/calmodulin-dependent protein kinase unc-43/CAMKII in vitro. Involved in the regulation of sex determination. Together with fem-3, required for male sexual development by promoting the proteasomal-mediated degradation of tra-1, a transcription repressor of male-specific genes. Promotes apoptosis. This Caenorhabditis elegans protein is Protein phosphatase fem-2.